A 354-amino-acid chain; its full sequence is Rhodopsin (354 aa).

Residues 1 to 36 (MNGTEGENFYVPMSNKTGVVRSPFDYPQYYLGEPWM) lie on the Extracellular side of the membrane. Asparagine 2 and asparagine 15 each carry an N-linked (GlcNAc...) asparagine glycan. The chain crosses the membrane as a helical span at residues 37–61 (FSALAAYMFFLILTGLPVNFLTLFV). At 62–73 (TIQHKKLRQPLN) the chain is on the cytoplasmic side. The helical transmembrane segment at 74-96 (YILLNLAVSDLFMVFGGFTTTII) threads the bilayer. The Extracellular portion of the chain corresponds to 97–110 (TSMNGYFIFGPAGC). Residues cysteine 110 and cysteine 187 are joined by a disulfide bond. Residues 111-133 (NFEGFFATLGGEVGLWCLVVLAI) form a helical membrane-spanning segment. The short motif at 134–136 (ERY) is the 'Ionic lock' involved in activated form stabilization element. At 134–152 (ERYMVVCKPMANFRFGSQH) the chain is on the cytoplasmic side. Residues 153–173 (AIIGVVFTWIMALSCAGPPLV) form a helical membrane-spanning segment. Residues 174-202 (GWSRYIPEGLQCSCGVDYYTMKPEVNNES) are Extracellular-facing. The chain crosses the membrane as a helical span at residues 203 to 224 (FVIYMFVVHFTIPLIVIFFCYG). Residues 225–252 (RLVCTVKEAAAQQQESESTQRAEREVTR) lie on the Cytoplasmic side of the membrane. The helical transmembrane segment at 253 to 274 (MVIIMVVAFLICWVPYASVAFY) threads the bilayer. Topologically, residues 275-286 (IFINQGCDFTPF) are extracellular. A helical transmembrane segment spans residues 287 to 308 (FMTVPAFFAKSSAVYNPLIYIL). The residue at position 296 (lysine 296) is an N6-(retinylidene)lysine. At 309 to 354 (MNKQFRNCMITTICLGKNPFEEEESTSASASKTEASSVSSSQVAPA) the chain is on the cytoplasmic side. The S-palmitoyl cysteine moiety is linked to residue cysteine 322. Residues 333–354 (STSASASKTEASSVSSSQVAPA) form a disordered region. Low complexity predominate over residues 334–354 (TSASASKTEASSVSSSQVAPA).

Belongs to the G-protein coupled receptor 1 family. Opsin subfamily. In terms of processing, phosphorylated on some or all of the serine and threonine residues present in the C-terminal region. Contains one covalently linked retinal chromophore.

It is found in the membrane. It localises to the cell projection. Its subcellular location is the cilium. The protein localises to the photoreceptor outer segment. Functionally, photoreceptor required for image-forming vision at low light intensity. While most salt water fish species use retinal as chromophore, most freshwater fish use 3-dehydroretinal, or a mixture of retinal and 3-dehydroretinal. Light-induced isomerization of 11-cis to all-trans retinal triggers a conformational change that activates signaling via G-proteins. Subsequent receptor phosphorylation mediates displacement of the bound G-protein alpha subunit by arrestin and terminates signaling. This Leucoraja erinaceus (Little skate) protein is Rhodopsin (rho).